The following is a 70-amino-acid chain: uncharacterized protein (70 aa).

This is an uncharacterized protein from Saccharomyces cerevisiae (strain ATCC 204508 / S288c) (Baker's yeast).